The following is a 232-amino-acid chain: Ubiquinone biosynthesis O-methyltransferase (232 aa).

Residues R36, G55, D76, and L120 each contribute to the S-adenosyl-L-methionine site.

This sequence belongs to the methyltransferase superfamily. UbiG/COQ3 family.

The catalysed reaction is a 3-demethylubiquinol + S-adenosyl-L-methionine = a ubiquinol + S-adenosyl-L-homocysteine + H(+). It catalyses the reaction a 3-(all-trans-polyprenyl)benzene-1,2-diol + S-adenosyl-L-methionine = a 2-methoxy-6-(all-trans-polyprenyl)phenol + S-adenosyl-L-homocysteine + H(+). The protein operates within cofactor biosynthesis; ubiquinone biosynthesis. In terms of biological role, O-methyltransferase that catalyzes the 2 O-methylation steps in the ubiquinone biosynthetic pathway. In Pseudomonas aeruginosa (strain UCBPP-PA14), this protein is Ubiquinone biosynthesis O-methyltransferase.